Reading from the N-terminus, the 1795-residue chain is MNLQNSHSKKYVLTFFMSTCLLTSSFLSTSARAASFKDLVSKTPAWEKHNSTQQQNIWKDLTPNEKIKKWQEAALVPSFTQAQNDLGIKYKETDLSSFLDNTRHKARQARAEILLYIERVKQQDFDTKKQAYINQGVVPTDIEAATNLGISYDPSKIDNNVEHDQKVRRAEKDKKAVIELYVSSINRGIKYKHYVDNDIIPEIQEVRTALNMNKDDAQSFVASIRTEIMENAKGQYIADSHIPTEKELKKKFGISRDDNRDGYIKSIRLKVMDKEKPQYIADSHIPTEKELEQKFGADKGEATNYIASIATQMMLDKKSYYIDNNIIPNADELMNEFKIGPVKATSYINQIRAGIEANQFLNNNDTTKPSTGRSQKKSGSKNDHWYMSNQSINNTGTSARIVTGREKKQRYFFDPISTFKTYFNTKASKGNLTQSQHNINRIIQQEENIEEFKNLIKTDPIAALTLQVDSSYKQEAVTTILSDFNDDTIQRVLFSNDKGKLDFNTNIDVKNRPILQELLENSSSEEKTKFAERIQDYATRNISNSQFEEKARLDLIKLAASKDKSSVENFLTLQLELKNRMQPYVVNSVYILTPEIVKEINIELKNKGLIRDSLTKDYMIKLAKEVNNHTLNSVIKVILSDSKILSNETNKILGLAVSNNANNLEQTQSGIPNPPPLPLNGGIPNPPPLPLNGSMPPPPLHSQGFSSNSKHFDLNQLQTEYPHIHSLYVQFTHNTTVQSKAPLQPTASSATSTGRSTPETAYAKLYAEYRTETGGTKANDLQDQLIKRQADLTNVIRQILTESYANQGADEKTLLNLFSISTPEIAEKAKEAFNTLAQDQYIKDITVNGKKTITSEEIIKNLFNEDTDDAIKRILLSSCKISEELKRPIKLEFNKSELIRELQGKQNPFKQLEFAYINTKNFDQDIFGNRIDELINNPNILTIVQQATFLTKEDTNLRKTINSDQAQAKLDDLRTAILSTIKIEELITANLPQHDFIAIVKEKDPELLKEFLKATTLTVTGNNNLDQLRLALPSFTGMSNEQIRILSNKLKMSIILKALKECSQEKATQYIHTGNMPPPPPPPPPLPDSQDLELAYLKSLGITKANTSTFKTTPKTYHFSSDIALRYKEFTLSGQKSAGYKAKYSDADLLKKAIVESVAFEHSKNLSKAHQNNKYFEQIQKAVNTMYSSFIGHRTELEQKIHNIYTSKLLELTKDKEFIKYVEDNIILNKKLTKAFTSADSDFIDSRTELEQKIHNIYIQQLTKYPEEEVKEAFNTASLDFIGPRTEIGQEVHNIYKSQLLELTKDTELCLFTQQVLAEATELEQKYGSDIQSENSNNEKKVERLDQEKLQLFKQENEATNDESSTKDDTQPEDSNKKSEQSDSKTALSPRLLSSNDSKNDKSSDDKKSLLALRSSDEDDTGYATDEEELEESNSTTDEELKKDVVLESEDEAIDVSFKTEAITEQDEVTQRQQVSDDTSGKVAILVQATSTLHKPVHYNINDRLTVAAIGAGDEETSINRGVWISGLYGINKQRIWKNIPKYQNRTTGITIGTDAEFINSHDVIGIAYSRLESQIKYNKKLGKTTVNGHLLSIYSLKELIKGFSLQTITSYGHNYIKNRSKNINNIIGKYQNNSLSFQTLLNYKYRTKYDLHFIPNIGFQYDYSRASNYKEYNVDIENLMIQKKSNQLFESSLGGKIVFKPIVTTNNIVLTPSLYGNIEHHFNNKNTKVNAKATFKGQTLQETIITLKQPKLGYNIGSNILMSRKNINVLLEYNYYTHRKYQSHQGLIKLKVNL.

The first 33 residues, 1–33 (MNLQNSHSKKYVLTFFMSTCLLTSSFLSTSARA), serve as a signal peptide directing secretion. Polar residues predominate over residues 360–373 (FLNNNDTTKPSTGR). Disordered stretches follow at residues 360-391 (FLNNNDTTKPSTGRSQKKSGSKNDHWYMSNQS), 664-709 (LEQT…SSNS), and 1354-1441 (KQEN…DEEL). The span at 672-700 (PNPPPLPLNGGIPNPPPLPLNGSMPPPPL) shows a compositional bias: pro residues. 2 stretches are compositionally biased toward basic and acidic residues: residues 1364–1383 (SSTKDDTQPEDSNKKSEQSD) and 1398–1409 (SKNDKSSDDKKS). The segment covering 1417–1432 (DEDDTGYATDEEELEE) has biased composition (acidic residues). In terms of domain architecture, Autotransporter spans 1516-1795 (ETSINRGVWI…QGLIKLKVNL (280 aa)).

It is found in the cell outer membrane. The protein is Putative surface cell antigen sca2 (sca2) of Rickettsia conorii (strain ATCC VR-613 / Malish 7).